An 876-amino-acid chain; its full sequence is MATERYNPRDAEPRWQQKWNEDKVFETDNSDPREKYYVLEMFPYPSGRIHMGHVRNYAMGDVVARYKRARGYNVLHPMGWDAFGMPAENAAMERGVHPASWTYQNIGSMKAQLKAMGLSLDWSREFATCDVEYYQHQQHLFLDFLEKGLVYRKQSKVNWDPVDNTVLANEQVIDGRGWRSGALVEQRELTQWFFKITDFSQDLLDALDTLDQWPEKVRLMQKNWIGRSEGLTIRWEIVAETAPAGETEITVYTTRPDTLFGASFLAIAADHPLAKDAAAKNADIEAFCEECRRAGTSLAALETAEKKGMDTGIRVRHPLDPSWELPVYVANFVLMDYGTGAIFGCPSGDQRDLDFARKYGLPVVAVVMPQDGDAASFSVGDTAYDGDGVMINSRFLDGKTTEEAFNIVADRLSAASLGNTPQGERKVNFRLRDWGISRQRYWGCPIPVIHCDDCGVVPVPKKDLPVKLPDDVTFDQPGNPLDRHPTWRHVSCPTCGKDARRETDTMDTFVDSSWYFTRFTAPWEAKPTDPEAANRWLPVDQYIGGIEHAILHLLYSRFFTRAMRETGHVAATEPFKGLFTQGMVVHETYSRGAGGSREWVAPADIRIEEIDGKRRALLLTTGEEIAIGSIEKMSKSKKNVVDPDDIIASYGADTARFFVLSDSPPERDVIWSEAGVEGAHRFTQRLWRLISEAADALSAVAPAPATEGEALSISQAAHRTLKAVENDYDKLWFNKAVARIYELVNALAAPMTRVAAGEGDATYRAAVRNAAEILIQLVAPMTPHLAEECWMALGNEGLLARTGWPQYGETLVIENDVVLPVQINGKKRAELTISRDADQNAVTNAVLDLDAVKNALNGQAPKKIIVVPQRIVNIVV.

The tract at residues M1–N20 is disordered. Residues P43 to H53 carry the 'HIGH' region motif. The short motif at K632–S636 is the 'KMSKS' region element. K635 provides a ligand contact to ATP.

The protein belongs to the class-I aminoacyl-tRNA synthetase family.

Its subcellular location is the cytoplasm. The enzyme catalyses tRNA(Leu) + L-leucine + ATP = L-leucyl-tRNA(Leu) + AMP + diphosphate. In Rhizobium leguminosarum bv. trifolii (strain WSM2304), this protein is Leucine--tRNA ligase.